Consider the following 326-residue polypeptide: MAMTAAVKDELSRVDVPKPCCRRAEMAALLRFAGGLHIVSGRVVVEAELDTGAVARRLRREIAEVYGYPSEIHVLASGGLRKGSHFIVRVVKDGEFLARQTGLLDVRGRPVRGLPPHVVAANVCCAVSAWRGAFMAHGSLTEPGRSSAMEITCPGPESALALVGAARRIGIAAKNREVRGVDRVVVKDGDAIAALLTRIGAHASVLAWEERRVRREVRATANRLANFDDANLRRSARAAVAAAARVTRALEILADDAPHHLTSAGRLRLEHRQASLEELGALADPPLTKDAIAGRIRRLLALADKRARDLGIPDTEAAVTPDMLVV.

The H-T-H motif DNA-binding region spans 275–308 (SLEELGALADPPLTKDAIAGRIRRLLALADKRAR).

It belongs to the WhiA family.

In terms of biological role, involved in cell division and chromosome segregation. This Salinispora tropica (strain ATCC BAA-916 / DSM 44818 / JCM 13857 / NBRC 105044 / CNB-440) protein is Probable cell division protein WhiA.